The sequence spans 35 residues: Thionin NsW2 (35 aa).

Intrachain disulfides connect cysteine 4/cysteine 32, cysteine 12/cysteine 30, and cysteine 16/cysteine 26.

Contains 4 disulfide bonds.

The protein localises to the secreted. Its function is as follows. Antimicrobial peptide disrupting membranes. Has antibacterial against Gram-positive bacteria S.aureus (MIC=6.5 uM) and B.subtilis (MIC=3.25 uM) but not against Gram-negative bacterium E.coli. Has antifungal activity against C.albicans (MIC=3.25 uM). The protein is Thionin NsW2 of Nigella sativa (Black cumin).